Reading from the N-terminus, the 104-residue chain is NADH-quinone oxidoreductase subunit K (104 aa).

Helical transmembrane passes span 4–24, 28–48, and 64–84; these read VAYY…AFLI, IITI…SFVA, and IFVF…LAII.

This sequence belongs to the complex I subunit 4L family. As to quaternary structure, NDH-1 is composed of 14 different subunits. Subunits NuoA, H, J, K, L, M, N constitute the membrane sector of the complex.

It localises to the cell inner membrane. The catalysed reaction is a quinone + NADH + 5 H(+)(in) = a quinol + NAD(+) + 4 H(+)(out). Its function is as follows. NDH-1 shuttles electrons from NADH, via FMN and iron-sulfur (Fe-S) centers, to quinones in the respiratory chain. The immediate electron acceptor for the enzyme in this species is believed to be ubiquinone. Couples the redox reaction to proton translocation (for every two electrons transferred, four hydrogen ions are translocated across the cytoplasmic membrane), and thus conserves the redox energy in a proton gradient. The protein is NADH-quinone oxidoreductase subunit K of Acidobacterium capsulatum (strain ATCC 51196 / DSM 11244 / BCRC 80197 / JCM 7670 / NBRC 15755 / NCIMB 13165 / 161).